Reading from the N-terminus, the 30-residue chain is Putative UPF0377 protein YNR075C-A (30 aa).

This sequence belongs to the UPF0377 family.

The sequence is that of Putative UPF0377 protein YNR075C-A from Saccharomyces cerevisiae (strain ATCC 204508 / S288c) (Baker's yeast).